Consider the following 160-residue polypeptide: MAFTFAAFCYMLSLVLCAALIFFAIWHIIAFDELRTDFKSPIDQCNPVHARERLRNIERICFLLRKLVLPEYSIHSLFCVMFLCAQEWLTLGLNVPLLFYHFWRYFHCPADSSELAYDPPVVMNADTLSYCQKEAWCKLAFYLLSFFYYLYCMIYTLVSS.

Topologically, residues Met-1–Tyr-10 are cytoplasmic. The helical transmembrane segment at Met-11–Phe-31 threads the bilayer. At Asp-32–Tyr-72 the chain is on the lumenal side. Residues Ser-73 to Leu-93 form a helical membrane-spanning segment. The Cytoplasmic segment spans residues Asn-94–Lys-138. Residues Leu-139 to Ser-159 traverse the membrane as a helical segment. A topological domain (lumenal) is located at residue Ser-160.

The protein belongs to the cornichon family. As to quaternary structure, acts as an auxiliary subunit for AMPA-selective glutamate receptors (AMPARs). Found in a complex with GRIA1, GRIA2, GRIA3, GRIA4, CNIH2, CACNG2, CACNG3, CACNG4, CACNG5, CACNG7 and CACNG8. In terms of tissue distribution, brain. Expressed in the neocortex, hippocampal formation, and cerebellum (at protein level).

The protein resides in the postsynaptic cell membrane. Its function is as follows. Regulates the trafficking and gating properties of AMPA-selective glutamate receptors (AMPARs). Promotes their targeting to the cell membrane and synapses and modulates their gating properties by regulating their rates of activation, deactivation and desensitization. This is Protein cornichon homolog 3 (Cnih3) from Rattus norvegicus (Rat).